We begin with the raw amino-acid sequence, 70 residues long: Large ribosomal subunit protein bL31 (70 aa).

Zn(2+) is bound by residues Cys-16, Cys-18, Cys-37, and Cys-40.

The protein belongs to the bacterial ribosomal protein bL31 family. Type A subfamily. In terms of assembly, part of the 50S ribosomal subunit. Zn(2+) is required as a cofactor.

In terms of biological role, binds the 23S rRNA. The protein is Large ribosomal subunit protein bL31 of Enterobacter sp. (strain 638).